The chain runs to 380 residues: cAMP-dependent protein kinase type I-alpha regulatory subunit (380 aa).

M1 bears the N-acetylmethionine mark. Residue A2 is modified to N-acetylalanine; in cAMP-dependent protein kinase type I-alpha regulatory subunit, N-terminally processed. The interval 2–135 (ASGSTASEEE…ALAKAIEKNV (134 aa)) is dimerization and phosphorylation. S3, S76, and S82 each carry phosphoserine. A disordered region spans residues 64–96 (IQNLQKASARADSREDEISPPPPNPVVKGRRRR). The Pseudophosphorylation motif motif lies at 95-99 (RRGAI). Phosphoserine is present on S100. 3',5'-cyclic AMP is bound by residues 136–253 (LFSH…SKVS), E201, R210, 254–380 (ILES…SLSV), E325, and R334. S257 carries the post-translational modification Phosphoserine.

It belongs to the cAMP-dependent kinase regulatory chain family. The inactive holoenzyme is composed of two regulatory chains and two catalytic chains. Activation by cAMP releases the two active catalytic monomers and the regulatory dimer. Interacts with PRKACA and PRKACB. PRKAR1A also interacts with RFC2; the complex may be involved in cell survival. Interacts with AKAP4. Interacts with RARA; the interaction occurs in the presence of cAMP or FSH and regulates RARA transcriptional activity. Interacts with the phosphorylated form of PJA2. Interacts with CBFA2T3. Interacts with PRKX; regulates this cAMP-dependent protein kinase. Interacts with smAKAP; this interaction may target PRKAR1A to the plasma membrane. Interacts with AICDA. Post-translationally, the pseudophosphorylation site binds to the substrate-binding region of the catalytic chain, resulting in the inhibition of its activity. As to expression, four types of regulatory chains are found: I-alpha, I-beta, II-alpha, and II-beta. Their expression varies among tissues and is in some cases constitutive and in others inducible.

It localises to the cell membrane. Its function is as follows. Regulatory subunit of the cAMP-dependent protein kinases involved in cAMP signaling in cells. This Sus scrofa (Pig) protein is cAMP-dependent protein kinase type I-alpha regulatory subunit (PRKAR1A).